Reading from the N-terminus, the 221-residue chain is Transcription factor bHLH148 (221 aa).

2 disordered regions span residues 1-45 (MASL…GEIH) and 70-89 (LNSSASTSSSPTAQKRGKAV). Composition is skewed to low complexity over residues 26 to 41 (SASSAASSRSSASSVS) and 72 to 82 (SSASTSSSPTA). In terms of domain architecture, bHLH spans 148–197 (KRRVSVLRLNKKSIPDVNRKVRVLGRLVPGCGKQSVPVILEEATDYIQAL).

Homodimer. Interacts with PRE3. Binds to RSA1.

Its subcellular location is the nucleus. Functionally, bHLH transcription factor that binds DNA on specific sequence 5'-CANNTG-3' in target gene promoters. Negatively regulates brassinosteroid signaling. Together with BHLH148/RITF1, regulates the transcription of several genes involved in the detoxification of reactive oxygen species (ROS) generated by salt (NaCl) stress. Confers tolerance to salt and to the oxidative stress-inducing reagents hydrogen peroxide H(2)O(2) and methyl viologen (MV). The sequence is that of Transcription factor bHLH148 from Arabidopsis thaliana (Mouse-ear cress).